The chain runs to 486 residues: UDP-N-acetylmuramoyl-L-alanyl-D-glutamate--2,6-diaminopimelate ligase (486 aa).

Serine 31 is a UDP-N-acetyl-alpha-D-muramoyl-L-alanyl-D-glutamate binding site. An ATP-binding site is contributed by glycine 109–threonine 115. UDP-N-acetyl-alpha-D-muramoyl-L-alanyl-D-glutamate-binding positions include asparagine 150, threonine 151–threonine 152, serine 178, and arginine 186. Lysine 218 is modified (N6-carboxylysine). Residues arginine 381, aspartate 405 to arginine 408, glycine 455, and glutamate 459 each bind meso-2,6-diaminopimelate. The Meso-diaminopimelate recognition motif signature appears at aspartate 405 to arginine 408.

This sequence belongs to the MurCDEF family. MurE subfamily. The cofactor is Mg(2+). Post-translationally, carboxylation is probably crucial for Mg(2+) binding and, consequently, for the gamma-phosphate positioning of ATP.

The protein localises to the cytoplasm. It catalyses the reaction UDP-N-acetyl-alpha-D-muramoyl-L-alanyl-D-glutamate + meso-2,6-diaminopimelate + ATP = UDP-N-acetyl-alpha-D-muramoyl-L-alanyl-gamma-D-glutamyl-meso-2,6-diaminopimelate + ADP + phosphate + H(+). Its pathway is cell wall biogenesis; peptidoglycan biosynthesis. Its function is as follows. Catalyzes the addition of meso-diaminopimelic acid to the nucleotide precursor UDP-N-acetylmuramoyl-L-alanyl-D-glutamate (UMAG) in the biosynthesis of bacterial cell-wall peptidoglycan. The chain is UDP-N-acetylmuramoyl-L-alanyl-D-glutamate--2,6-diaminopimelate ligase from Halalkalibacterium halodurans (strain ATCC BAA-125 / DSM 18197 / FERM 7344 / JCM 9153 / C-125) (Bacillus halodurans).